A 398-amino-acid chain; its full sequence is S-adenosylmethionine synthase (398 aa).

Residue H17 participates in ATP binding. D19 is a Mg(2+) binding site. Position 45 (E45) interacts with K(+). Residues E58 and Q101 each contribute to the L-methionine site. The flexible loop stretch occupies residues 101-111; that stretch reads QSPDIAQGVDT. ATP is bound by residues 176–178, 243–244, D252, 258–259, and K279; these read DGK, RF, and RK. D252 serves as a coordination point for L-methionine. K283 provides a ligand contact to L-methionine.

The protein belongs to the AdoMet synthase family. As to quaternary structure, homotetramer; dimer of dimers. The cofactor is Mg(2+). It depends on K(+) as a cofactor.

The protein resides in the cytoplasm. The enzyme catalyses L-methionine + ATP + H2O = S-adenosyl-L-methionine + phosphate + diphosphate. It participates in amino-acid biosynthesis; S-adenosyl-L-methionine biosynthesis; S-adenosyl-L-methionine from L-methionine: step 1/1. Its function is as follows. Catalyzes the formation of S-adenosylmethionine (AdoMet) from methionine and ATP. The overall synthetic reaction is composed of two sequential steps, AdoMet formation and the subsequent tripolyphosphate hydrolysis which occurs prior to release of AdoMet from the enzyme. The protein is S-adenosylmethionine synthase of Staphylococcus saprophyticus subsp. saprophyticus (strain ATCC 15305 / DSM 20229 / NCIMB 8711 / NCTC 7292 / S-41).